Consider the following 3704-residue polypeptide: Fatty acid synthase 2 (3704 aa).

Over residues 27–41 (AVSAHGSPPSSASPG) the composition is skewed to low complexity. The disordered stretch occupies residues 27-52 (AVSAHGSPPSSASPGPDDKAFSVDGT). The interval 216-475 (ALFGGQGNNH…QARIPFSKRK (260 aa)) is acetyltransferase (AT) domain. The enoyl reductase (ER) domain stretch occupies residues 639–887 (SRLLGKPPIM…LIASTQGCSD (249 aa)). Positions 1216-1709 (GEQPSWIRAL…VPGDQLSVQL (494 aa)) are dehydratase (DH) domain. The 107-residue stretch at 1624 to 1730 (PKTNEPYSRA…VQIDASNQRG (107 aa)) folds into the MaoC-like domain. The malonyl/palmitoyl transferase (MT/PT) domain stretch occupies residues 1747-2112 (YVFTGQGSQA…IEHVSEVTRS (366 aa)). Positions 2265 to 2343 (DERLDPLLTV…AALRPGYSGE (79 aa)) constitute a Carrier domain. Ser-2303 carries the post-translational modification O-(pantetheine 4'-phosphoryl)serine. Positions 2733–2969 (GLDVLLTGVG…LGLVEPEFAS (237 aa)) are ketoreductase (KR) domain. The Ketosynthase family 3 (KS3) domain maps to 3176-3623 (QQEIELTHDL…QVGGIAMILH (448 aa)). Active-site for beta-ketoacyl synthase activity residues include Cys-3359, His-3506, and His-3547.

In the N-terminal section; belongs to the fungal fatty acid synthetase subunit beta family. The protein in the C-terminal section; belongs to the thiolase-like superfamily. Fungal fatty acid synthetase subunit alpha family.

Its pathway is secondary metabolite biosynthesis. In terms of biological role, fatty acid synthase; part of the gene cluster that mediates the biosynthesis of the glycolipid biosurfactant ustilagic acid (UA). UA is a secreted cellobiose glycolipid that is toxic for many microorganisms and confers biocontrol activity to U.maydis. UA consists of 15,16-dihydroxypalmitic or 2,15,16-trihydroxypalmitic acid, which is O-glycosidically linked to cellobiose at its terminal hydroxyl group. In addition, the cellobiose moiety is acetylated and acylated with a short-chain hydroxy fatty acid. UA biosynthesis starts with omega-hydroxylation of palmitic acid catalyzed by the cytochrome P450 monooxygenase cyp1. Terminal hydroxylation of palmitic acid precedes subterminal hydroxylation catalyzed by the cytochrome P450 monooxygenase cyp2. Sequential glucosylation of the hydroxy fatty acid is probably catalyzed by the glycosyltransferase ugt1. The cellobiose lipid is further decorated by acetylation of the proximal glucose residue and by acylation with a short-chain beta-hydroxy fatty acid at the distal glucose residue. The acyltransferase uat1 may be a good candidate for catalyzing either acetylation or acylation of the cellobiose lipid. The fatty acid synthase fas2 may be involved in synthesis of the carbon backbone of the short-chain beta-hydroxy fatty acid esterified to the cellobiose disaccharide. The secreted UA consists of a mixture of both alpha-hydroxylated and non-hydroxylated glycolipids; therefore, alpha-hydroxylation of the long-chain fatty, catalyzed by the fatty acid hydroxylase ahd1, occurs late in UA biosynthesis and may be the last step before secretion. This is Fatty acid synthase 2 from Mycosarcoma maydis (Corn smut fungus).